Here is a 363-residue protein sequence, read N- to C-terminus: GDSL esterase/lipase At1g29670 (363 aa).

An N-terminal signal peptide occupies residues 1 to 24 (MESYLTKWCVVLVLLCFGFSVVKA). The Nucleophile role is filled by S39. Catalysis depends on residues D327 and H330.

Belongs to the 'GDSL' lipolytic enzyme family.

The protein resides in the secreted. The polypeptide is GDSL esterase/lipase At1g29670 (Arabidopsis thaliana (Mouse-ear cress)).